Reading from the N-terminus, the 60-residue chain is Large ribosomal subunit protein bL32 (60 aa).

The disordered stretch occupies residues 1–46; that stretch reads MAVQQNKKSPSKRGMHRSHNALNTPGTAIEPTTGEVHLRHHISPTG. Residues 9-19 are compositionally biased toward basic residues; the sequence is SPSKRGMHRSH.

It belongs to the bacterial ribosomal protein bL32 family.

The chain is Large ribosomal subunit protein bL32 from Leptothrix cholodnii (strain ATCC 51168 / LMG 8142 / SP-6) (Leptothrix discophora (strain SP-6)).